A 223-amino-acid polypeptide reads, in one-letter code: Cytidylate kinase (223 aa).

Residue 12 to 20 (GPSGVGKGT) participates in ATP binding.

Belongs to the cytidylate kinase family. Type 1 subfamily.

Its subcellular location is the cytoplasm. The catalysed reaction is CMP + ATP = CDP + ADP. The enzyme catalyses dCMP + ATP = dCDP + ADP. The chain is Cytidylate kinase from Xylella fastidiosa (strain M23).